Here is a 1083-residue protein sequence, read N- to C-terminus: Error-prone DNA polymerase (1083 aa).

It belongs to the DNA polymerase type-C family. DnaE2 subfamily.

The protein resides in the cytoplasm. The enzyme catalyses DNA(n) + a 2'-deoxyribonucleoside 5'-triphosphate = DNA(n+1) + diphosphate. In terms of biological role, DNA polymerase involved in damage-induced mutagenesis and translesion synthesis (TLS). It is not the major replicative DNA polymerase. This is Error-prone DNA polymerase from Xanthomonas oryzae pv. oryzae (strain PXO99A).